The sequence spans 66 residues: Large ribosomal subunit protein bL33c (66 aa).

This sequence belongs to the bacterial ribosomal protein bL33 family.

It localises to the plastid. The protein resides in the chloroplast. In Coffea arabica (Arabian coffee), this protein is Large ribosomal subunit protein bL33c.